The primary structure comprises 335 residues: Ferrochelatase (335 aa).

Positions 192 and 291 each coordinate Fe cation.

Belongs to the ferrochelatase family.

Its subcellular location is the cytoplasm. It catalyses the reaction heme b + 2 H(+) = protoporphyrin IX + Fe(2+). It functions in the pathway porphyrin-containing compound metabolism; protoheme biosynthesis; protoheme from protoporphyrin-IX: step 1/1. Its function is as follows. Catalyzes the ferrous insertion into protoporphyrin IX. The chain is Ferrochelatase from Bdellovibrio bacteriovorus (strain ATCC 15356 / DSM 50701 / NCIMB 9529 / HD100).